Here is a 375-residue protein sequence, read N- to C-terminus: Lipid-A-disaccharide synthase (375 aa).

It belongs to the LpxB family.

The enzyme catalyses a lipid X + a UDP-2-N,3-O-bis[(3R)-3-hydroxyacyl]-alpha-D-glucosamine = a lipid A disaccharide + UDP + H(+). It functions in the pathway bacterial outer membrane biogenesis; LPS lipid A biosynthesis. Functionally, condensation of UDP-2,3-diacylglucosamine and 2,3-diacylglucosamine-1-phosphate to form lipid A disaccharide, a precursor of lipid A, a phosphorylated glycolipid that anchors the lipopolysaccharide to the outer membrane of the cell. This chain is Lipid-A-disaccharide synthase, found in Pseudomonas putida (strain W619).